The chain runs to 288 residues: Solute carrier family 25 member 47-B (288 aa).

Solcar repeat units lie at residues 1 to 83 (MHLA…ILQF), 99 to 191 (AHIF…ICEI), and 199 to 286 (PGWP…VVRL). The next 6 helical transmembrane spans lie at 3-23 (LADF…GYPL), 58-75 (GMSM…LVFG), 101-121 (IFLA…PADI), 175-195 (GPSF…LTTE), 199-219 (PGWP…WAVG), and 257-277 (VLFR…MSVF).

Belongs to the mitochondrial carrier (TC 2.A.29) family.

It localises to the mitochondrion inner membrane. The sequence is that of Solute carrier family 25 member 47-B (slc25a47b) from Danio rerio (Zebrafish).